We begin with the raw amino-acid sequence, 348 residues long: Putative olfactory receptor 3A4 (348 aa).

Over 1 to 28 the chain is Extracellular; the sequence is MDLGNSGNDSVVTKFVLLGLTETAALQP. The N-linked (GlcNAc...) asparagine glycan is linked to Asn-8. The chain crosses the membrane as a helical span at residues 29 to 52; sequence ILFVIFLLAYVTTIGGTLSILAAI. Residues 53 to 60 are Cytoplasmic-facing; sequence LMETKLHS. The chain crosses the membrane as a helical span at residues 61-82; it reads PMYFFLGNLSLPDVGCVSVTVP. The Extracellular segment spans residues 83 to 103; the sequence is AMLSHFISNDRSIPYKACLSE. A disulfide bond links Cys-100 and Cys-192. Residues 104 to 123 traverse the membrane as a helical segment; sequence LFFFHLLAGADCFLLTIMAY. Residues 124–143 lie on the Cytoplasmic side of the membrane; that stretch reads DRYLAICQSLTYSSRMSWGI. Residues 144 to 161 form a helical membrane-spanning segment; the sequence is QQALVGMSCVFSFTNALT. At 162–199 the chain is on the extracellular side; it reads QTVALSPLNFCGPNVINHFYCDLPQPFQLSCSSVHLNG. The helical transmembrane segment at 200-222 threads the bilayer; sequence QLLFVAAAFMGVAPLVLITVSYA. Residues 223–239 are Cytoplasmic-facing; sequence HVAAAVLRIRSAEGRKK. A helical membrane pass occupies residues 240–262; sequence AFSTCSSHLTVVGIFYGTGVFSY. The Extracellular portion of the chain corresponds to 263–275; that stretch reads TRLGSVESSDKDK. A helical membrane pass occupies residues 276-295; the sequence is GIGILNTVISPMLNPLIYWT. At 296–348 the chain is on the cytoplasmic side; the sequence is SLLDVGCISHCSSDAGVSPGPPVQSSLCCLQFTALLSPPPGWGGLSPLNSHGL.

Belongs to the G-protein coupled receptor 1 family.

It localises to the cell membrane. Odorant receptor. The polypeptide is Putative olfactory receptor 3A4 (OR3A4P) (Homo sapiens (Human)).